A 343-amino-acid chain; its full sequence is MKTVSIIGGTGYTGSELLRLLSNHDNVEVLNVTSRKEAGKKLTDFHPQVRNLRNYNDLEFQNIAPEDIDTDIVFCATPHGASMAIVPILHEKGINVIDLSGDYRFEDIEMYESWYGLKHTGIIESAVYGLPELHREKIKKSKTIANPGCYPTGAILSMAPLVANDLVDERIIFDSKSGVSGAGVVASQTTHFPNVNENLGAYKITNHRHSPEIGKELDYLGNKKLKVSFTPHLLPVTRGILTTAHSYLKEDVSRADVIEIYEEFYKDEFFVRIFEEGMVSLTGVRGTNFCDIGGFEIDQHGRIVVISAIDNLVKGASGQAIQNMNIIMGFDEKEGLSVGGMRP.

Residue Cys-149 is part of the active site.

The protein belongs to the NAGSA dehydrogenase family. Type 1 subfamily.

It localises to the cytoplasm. It carries out the reaction N-acetyl-L-glutamate 5-semialdehyde + phosphate + NADP(+) = N-acetyl-L-glutamyl 5-phosphate + NADPH + H(+). It participates in amino-acid biosynthesis; L-arginine biosynthesis; N(2)-acetyl-L-ornithine from L-glutamate: step 3/4. Functionally, catalyzes the NADPH-dependent reduction of N-acetyl-5-glutamyl phosphate to yield N-acetyl-L-glutamate 5-semialdehyde. The protein is N-acetyl-gamma-glutamyl-phosphate reductase of Methanococcus maripaludis (strain C6 / ATCC BAA-1332).